Here is a 324-residue protein sequence, read N- to C-terminus: D-erythronate dehydrogenase (324 aa).

The NAD(+) site is built by S125, Y149, and K153. Residue Y149 is the Proton acceptor of the active site.

It belongs to the NAD(P)-dependent epimerase/dehydratase family.

It catalyses the reaction D-erythronate + NAD(+) = 2-dehydro-D-erythronate + NADH + H(+). Catalyzes oxidation of D-erythronate to 2-oxo-tetronate. Can use either NAD(+) or NADP(+) as cosubstrate, with a preference for NAD(+). The polypeptide is D-erythronate dehydrogenase (Cupriavidus necator (strain ATCC 17699 / DSM 428 / KCTC 22496 / NCIMB 10442 / H16 / Stanier 337) (Ralstonia eutropha)).